Here is a 146-residue protein sequence, read N- to C-terminus: UPF0260 protein Sden_1632 (146 aa).

It belongs to the UPF0260 family.

The chain is UPF0260 protein Sden_1632 from Shewanella denitrificans (strain OS217 / ATCC BAA-1090 / DSM 15013).